The sequence spans 436 residues: Tryptophan synthase beta chain (436 aa).

Lys-129 is modified (N6-(pyridoxal phosphate)lysine).

This sequence belongs to the TrpB family. In terms of assembly, tetramer of two alpha and two beta chains. It depends on pyridoxal 5'-phosphate as a cofactor.

It catalyses the reaction (1S,2R)-1-C-(indol-3-yl)glycerol 3-phosphate + L-serine = D-glyceraldehyde 3-phosphate + L-tryptophan + H2O. It functions in the pathway amino-acid biosynthesis; L-tryptophan biosynthesis; L-tryptophan from chorismate: step 5/5. In terms of biological role, the beta subunit is responsible for the synthesis of L-tryptophan from indole and L-serine. In Prochlorococcus marinus (strain MIT 9313), this protein is Tryptophan synthase beta chain.